Consider the following 357-residue polypeptide: Heat-inducible transcription repressor HrcA (357 aa).

The protein belongs to the HrcA family.

Its function is as follows. Negative regulator of class I heat shock genes (grpE-dnaK-dnaJ and groELS operons). Prevents heat-shock induction of these operons. The sequence is that of Heat-inducible transcription repressor HrcA from Chlorobium limicola (strain DSM 245 / NBRC 103803 / 6330).